The sequence spans 217 residues: UPF0319 protein HS_1349 (217 aa).

The N-terminal stretch at 1 to 21 is a signal peptide; it reads MKFSFAALASAMLLTSTAAFA.

The protein belongs to the UPF0319 family.

The chain is UPF0319 protein HS_1349 from Histophilus somni (strain 129Pt) (Haemophilus somnus).